Consider the following 394-residue polypeptide: HORMA domain-containing protein 1 (394 aa).

Residues 24–226 (HQSLVLVKRL…TPFHIFKVKV (203 aa)) enclose the HORMA domain. Over residues 253-282 (ILRDKDVEDEQEHYTSDDLDIETKMEEQEK) the composition is skewed to basic and acidic residues. A disordered region spans residues 253–394 (ILRDKDVEDE…RKFSEPKEHI (142 aa)). Acidic residues predominate over residues 288–300 (ELEEPSLVCEEDE). Composition is skewed to polar residues over residues 310–324 (LSIS…VNKT) and 343–352 (KMANGNQPVK). Residues 362-374 (QHESGRIVLHHFD) show a composition bias toward basic and acidic residues. S376 bears the Phosphoserine mark. A Nuclear localization signal motif is present at residues 383–386 (KRRK).

Interacts with HORMAD2. Interacts with IHO1. Phosphorylated at Ser-377 in a SPO11-dependent manner. In terms of tissue distribution, testis-specific. Over-expressed in carcinomas.

The protein resides in the nucleus. The protein localises to the chromosome. Functionally, plays a key role in meiotic progression. Regulates 3 different functions during meiosis: ensures that sufficient numbers of processed DNA double-strand breaks (DSBs) are available for successful homology search by increasing the steady-state numbers of single-stranded DSB ends. Promotes synaptonemal-complex formation independently of its role in homology search. Plays a key role in the male mid-pachytene checkpoint and the female meiotic prophase checkpoint: required for efficient build-up of ATR activity on unsynapsed chromosome regions, a process believed to form the basis of meiotic silencing of unsynapsed chromatin (MSUC) and meiotic prophase quality control in both sexes. The chain is HORMA domain-containing protein 1 from Homo sapiens (Human).